A 120-amino-acid polypeptide reads, in one-letter code: Large ribosomal subunit protein uL18 (120 aa).

This sequence belongs to the universal ribosomal protein uL18 family. As to quaternary structure, part of the 50S ribosomal subunit; part of the 5S rRNA/L5/L18/L25 subcomplex. Contacts the 5S and 23S rRNAs.

In terms of biological role, this is one of the proteins that bind and probably mediate the attachment of the 5S RNA into the large ribosomal subunit, where it forms part of the central protuberance. In Bacillus pumilus (strain SAFR-032), this protein is Large ribosomal subunit protein uL18.